Here is a 215-residue protein sequence, read N- to C-terminus: Probable nicotinate-nucleotide adenylyltransferase (215 aa).

Belongs to the NadD family.

It carries out the reaction nicotinate beta-D-ribonucleotide + ATP + H(+) = deamido-NAD(+) + diphosphate. It functions in the pathway cofactor biosynthesis; NAD(+) biosynthesis; deamido-NAD(+) from nicotinate D-ribonucleotide: step 1/1. Functionally, catalyzes the reversible adenylation of nicotinate mononucleotide (NaMN) to nicotinic acid adenine dinucleotide (NaAD). This chain is Probable nicotinate-nucleotide adenylyltransferase, found in Shewanella sp. (strain W3-18-1).